The following is a 500-amino-acid chain: Transcription termination factor MTERF8, chloroplastic (500 aa).

A chloroplast-targeting transit peptide spans 1-64 (MVILSLVSCS…NHREPALTFR (64 aa)).

The protein belongs to the mTERF family.

Its subcellular location is the plastid. The protein resides in the chloroplast. Functionally, transcription termination factor that is transcriptionally active in chloroplasts. This chain is Transcription termination factor MTERF8, chloroplastic, found in Arabidopsis thaliana (Mouse-ear cress).